A 154-amino-acid chain; its full sequence is Yop proteins translocation protein O (154 aa).

A disordered region spans residues E132 to A154.

Belongs to the SpaM family.

Its function is as follows. Component of the yop secretion machinery. The protein is Yop proteins translocation protein O (yscO) of Yersinia pseudotuberculosis serotype I (strain IP32953).